A 194-amino-acid chain; its full sequence is Protein GrpE (194 aa).

Residues 1–12 (MNKQKNNRERTP) are compositionally biased toward basic and acidic residues. The segment at 1-44 (MNKQKNNRERTPQPEQDTERDEQLTNSHENDIDSAPAAEENDKV) is disordered.

Belongs to the GrpE family. Homodimer.

The protein localises to the cytoplasm. Its function is as follows. Participates actively in the response to hyperosmotic and heat shock by preventing the aggregation of stress-denatured proteins, in association with DnaK and GrpE. It is the nucleotide exchange factor for DnaK and may function as a thermosensor. Unfolded proteins bind initially to DnaJ; upon interaction with the DnaJ-bound protein, DnaK hydrolyzes its bound ATP, resulting in the formation of a stable complex. GrpE releases ADP from DnaK; ATP binding to DnaK triggers the release of the substrate protein, thus completing the reaction cycle. Several rounds of ATP-dependent interactions between DnaJ, DnaK and GrpE are required for fully efficient folding. In Porphyromonas gingivalis (strain ATCC BAA-308 / W83), this protein is Protein GrpE.